A 37-amino-acid chain; its full sequence is Large ribosomal subunit protein bL36 (37 aa).

It belongs to the bacterial ribosomal protein bL36 family.

The polypeptide is Large ribosomal subunit protein bL36 (Dictyoglomus thermophilum (strain ATCC 35947 / DSM 3960 / H-6-12)).